We begin with the raw amino-acid sequence, 577 residues long: Isocitrate dehydrogenase kinase/phosphatase (577 aa).

Residues 315 to 321 and Lys-336 each bind ATP; that span reads APGIRGM. Asp-371 is a catalytic residue.

Belongs to the AceK family.

It localises to the cytoplasm. It carries out the reaction L-seryl-[isocitrate dehydrogenase] + ATP = O-phospho-L-seryl-[isocitrate dehydrogenase] + ADP + H(+). Functionally, bifunctional enzyme which can phosphorylate or dephosphorylate isocitrate dehydrogenase (IDH) on a specific serine residue. This is a regulatory mechanism which enables bacteria to bypass the Krebs cycle via the glyoxylate shunt in response to the source of carbon. When bacteria are grown on glucose, IDH is fully active and unphosphorylated, but when grown on acetate or ethanol, the activity of IDH declines drastically concomitant with its phosphorylation. This chain is Isocitrate dehydrogenase kinase/phosphatase, found in Escherichia fergusonii (strain ATCC 35469 / DSM 13698 / CCUG 18766 / IAM 14443 / JCM 21226 / LMG 7866 / NBRC 102419 / NCTC 12128 / CDC 0568-73).